The primary structure comprises 217 residues: MKSIVEQELLFREKSVFEDQAIKQGYSRIAGVDEAGRGPLAGPVVAGACILPGGKLFLGIDDSKKLSPKQRRYLYELLLEDPEVTCGVGVVSVERIDEINILEATKEAMVQAIASLRSTPDFLLVDGLFLPHEIPCLKIIKGDSRSVSIAAASIIAKEYRDELMRKLHSEYPEYGFDKHKGYGTVAHLQALKQFGPCVYHRKSFSPVKESIREGICQ.

The region spanning 27–216 (SRIAGVDEAG…VKESIREGIC (190 aa)) is the RNase H type-2 domain. Positions 33, 34, and 126 each coordinate a divalent metal cation.

This sequence belongs to the RNase HII family. Mn(2+) serves as cofactor. It depends on Mg(2+) as a cofactor.

The protein localises to the cytoplasm. It catalyses the reaction Endonucleolytic cleavage to 5'-phosphomonoester.. Endonuclease that specifically degrades the RNA of RNA-DNA hybrids. This chain is Ribonuclease HII (rnhB), found in Chlamydia muridarum (strain MoPn / Nigg).